A 112-amino-acid polypeptide reads, in one-letter code: Small ribosomal subunit protein bS6 (112 aa).

The protein belongs to the bacterial ribosomal protein bS6 family.

In terms of biological role, binds together with bS18 to 16S ribosomal RNA. This chain is Small ribosomal subunit protein bS6, found in Chlamydia trachomatis serovar L2 (strain ATCC VR-902B / DSM 19102 / 434/Bu).